The following is a 140-amino-acid chain: Large ribosomal subunit protein uL13 (140 aa).

This sequence belongs to the universal ribosomal protein uL13 family. In terms of assembly, part of the 50S ribosomal subunit.

In terms of biological role, this protein is one of the early assembly proteins of the 50S ribosomal subunit, although it is not seen to bind rRNA by itself. It is important during the early stages of 50S assembly. The protein is Large ribosomal subunit protein uL13 of Sulfurimonas denitrificans (strain ATCC 33889 / DSM 1251) (Thiomicrospira denitrificans (strain ATCC 33889 / DSM 1251)).